A 512-amino-acid polypeptide reads, in one-letter code: 2,3-bisphosphoglycerate-independent phosphoglycerate mutase (512 aa).

Residues aspartate 12 and serine 62 each coordinate Mn(2+). Residue serine 62 is the Phosphoserine intermediate of the active site. Residues histidine 123, 153–154 (RD), arginine 185, arginine 191, 260–263 (RPDR), and lysine 333 contribute to the substrate site. Aspartate 400, histidine 404, aspartate 441, histidine 442, and histidine 460 together coordinate Mn(2+).

Belongs to the BPG-independent phosphoglycerate mutase family. In terms of assembly, monomer. It depends on Mn(2+) as a cofactor.

It carries out the reaction (2R)-2-phosphoglycerate = (2R)-3-phosphoglycerate. It functions in the pathway carbohydrate degradation; glycolysis; pyruvate from D-glyceraldehyde 3-phosphate: step 3/5. Catalyzes the interconversion of 2-phosphoglycerate and 3-phosphoglycerate. This is 2,3-bisphosphoglycerate-independent phosphoglycerate mutase from Clostridium beijerinckii (strain ATCC 51743 / NCIMB 8052) (Clostridium acetobutylicum).